We begin with the raw amino-acid sequence, 81 residues long: MAHSVKIYDTCIGCTQCVRACPTDVLEMVPWDGCKASQIASAPRTEDCVGCKRCESACPTDFLSVRVYLGAETTRSMGLAY.

4Fe-4S ferredoxin-type domains lie at 2–31 (AHSV…MVPW) and 39–68 (IASA…VRVY). The [4Fe-4S] cluster site is built by Cys-11, Cys-14, Cys-17, Cys-21, Cys-48, Cys-51, Cys-54, and Cys-58.

As to quaternary structure, the eukaryotic PSI reaction center is composed of at least 11 subunits. The cofactor is [4Fe-4S] cluster.

It localises to the plastid. The protein resides in the chloroplast thylakoid membrane. The enzyme catalyses reduced [plastocyanin] + hnu + oxidized [2Fe-2S]-[ferredoxin] = oxidized [plastocyanin] + reduced [2Fe-2S]-[ferredoxin]. In terms of biological role, apoprotein for the two 4Fe-4S centers FA and FB of photosystem I (PSI); essential for photochemical activity. FB is the terminal electron acceptor of PSI, donating electrons to ferredoxin. The C-terminus interacts with PsaA/B/D and helps assemble the protein into the PSI complex. Required for binding of PsaD and PsaE to PSI. PSI is a plastocyanin-ferredoxin oxidoreductase, converting photonic excitation into a charge separation, which transfers an electron from the donor P700 chlorophyll pair to the spectroscopically characterized acceptors A0, A1, FX, FA and FB in turn. The polypeptide is Photosystem I iron-sulfur center (Physcomitrium patens (Spreading-leaved earth moss)).